The chain runs to 530 residues: MGGEELSEFEKQRLANIAERDALLKKLTQDAQSVGLFPPKMPKGASPAGDKAKKKKPAPKKVKKEEAAAAAPVPRRMSSRLRGIAAESEVAKRKADEHDAALQEAERAKRMRKSDSFSLSEMLVSGQKLSGESLLGVDVVTKGVAMPYQRTFSDEDIKKTTDKDLKALREEMSGLGLWDAWEPNRIKLTPERIYAMTFHPSESKPLIFAGDKMGHLGVLDASQTKPVSAATHDEDEEDDDDDPDPVLTTLKPHTRTISCMTIHPSKPTHLYTASYDSSIREMDLEKTTSVERYAPASTADDVPISGLDMALDDPHCLYWTTLDGEFGRYDMRTPRQDSATRWTLSDKKIGGFSLYPTHPHYFATASLDRTMRLWDLRKLSHKSPVAVGEHESRLSVSHAAFNGAGQVATSSYDDSLKIYDFGAKGIASWKPGHSLSDAQMKPDVVVRHNCQTGRWVTILRPQWQQNPQSHIQRFCIGNMNRFVDIYSGSGDQLAQLGGDGITAVPAVAVFHRSKNWVAGGTASGKICLWM.

Disordered regions lie at residues 34–115 (VGLF…RKSD) and 224–250 (TKPV…LTTL). Residues 52–62 (AKKKKPAPKKV) are compositionally biased toward basic residues. The segment covering 89 to 108 (EVAKRKADEHDAALQEAERA) has biased composition (basic and acidic residues). Residues 188 to 229 (LTPERIYAMTFHPSESKPLIFAGDKMGHLGVLDASQTKPVSA) form a WD 1 repeat. Residues 233–244 (DEDEEDDDDDPD) are compositionally biased toward acidic residues. 6 WD repeats span residues 252–292 (PHTR…SVER), 302–339 (VPIS…QDSA), 344–384 (LSDK…HKSP), 389–430 (EHES…ASWK), 453–496 (GRWV…LAQL), and 499–530 (DGIT…CLWM).

Belongs to the WD repeat DDB2/WDR76 family.

DNA-binding protein that binds to both single- and double-stranded DNA. Binds preferentially to UV-damaged DNA. May be involved in DNA-metabolic processes. The protein is DNA damage-binding protein cmr1 of Aspergillus terreus (strain NIH 2624 / FGSC A1156).